The primary structure comprises 246 residues: Sec-independent protein translocase protein TatB (246 aa).

A helical transmembrane segment spans residues M1–G21. Disordered stretches follow at residues S94–V122, S179–T204, and V225–A246. Composition is skewed to polar residues over residues Q97 to P112 and P187 to E197.

The protein belongs to the TatB family. As to quaternary structure, the Tat system comprises two distinct complexes: a TatABC complex, containing multiple copies of TatA, TatB and TatC subunits, and a separate TatA complex, containing only TatA subunits. Substrates initially bind to the TatABC complex, which probably triggers association of the separate TatA complex to form the active translocon.

It is found in the cell inner membrane. Its function is as follows. Part of the twin-arginine translocation (Tat) system that transports large folded proteins containing a characteristic twin-arginine motif in their signal peptide across membranes. Together with TatC, TatB is part of a receptor directly interacting with Tat signal peptides. TatB may form an oligomeric binding site that transiently accommodates folded Tat precursor proteins before their translocation. The chain is Sec-independent protein translocase protein TatB from Agrobacterium fabrum (strain C58 / ATCC 33970) (Agrobacterium tumefaciens (strain C58)).